The sequence spans 301 residues: Homoserine O-acetyltransferase (301 aa).

Residue C142 is the Acyl-thioester intermediate of the active site. Substrate-binding residues include K163 and S192. H235 functions as the Proton acceptor in the catalytic mechanism. E237 is an active-site residue. Position 249 (R249) interacts with substrate.

This sequence belongs to the MetA family.

The protein localises to the cytoplasm. It carries out the reaction L-homoserine + acetyl-CoA = O-acetyl-L-homoserine + CoA. It participates in amino-acid biosynthesis; L-methionine biosynthesis via de novo pathway; O-acetyl-L-homoserine from L-homoserine: step 1/1. Transfers an acetyl group from acetyl-CoA to L-homoserine, forming acetyl-L-homoserine. The chain is Homoserine O-acetyltransferase from Bacillus cereus (strain B4264).